The primary structure comprises 131 residues: Profilin (131 aa).

The protein belongs to the profilin family. As to quaternary structure, occurs in many kinds of cells as a complex with monomeric actin in a 1:1 ratio.

It localises to the cytoplasm. The protein resides in the cytoskeleton. Functionally, binds to actin and affects the structure of the cytoskeleton. At high concentrations, profilin prevents the polymerization of actin, whereas it enhances it at low concentrations. By binding to PIP2, it inhibits the formation of IP3 and DG. The sequence is that of Profilin from Fragaria ananassa (Strawberry).